A 445-amino-acid chain; its full sequence is Tubulin beta-3 chain (445 aa).

GTP contacts are provided by Gln11, Glu69, Ser138, Gly142, Thr143, Gly144, Asn204, and Asn226. Mg(2+) is bound at residue Glu69. Residues 425–445 form a disordered region; the sequence is YQDATAEEYDEEEQDGEEEHD. The span at 429–445 shows a compositional bias: acidic residues; sequence TAEEYDEEEQDGEEEHD.

This sequence belongs to the tubulin family. In terms of assembly, dimer of alpha and beta chains. A typical microtubule is a hollow water-filled tube with an outer diameter of 25 nm and an inner diameter of 15 nM. Alpha-beta heterodimers associate head-to-tail to form protofilaments running lengthwise along the microtubule wall with the beta-tubulin subunit facing the microtubule plus end conferring a structural polarity. Microtubules usually have 13 protofilaments but different protofilament numbers can be found in some organisms and specialized cells. Requires Mg(2+) as cofactor.

The protein localises to the cytoplasm. The protein resides in the cytoskeleton. Its function is as follows. Tubulin is the major constituent of microtubules, a cylinder consisting of laterally associated linear protofilaments composed of alpha- and beta-tubulin heterodimers. Microtubules grow by the addition of GTP-tubulin dimers to the microtubule end, where a stabilizing cap forms. Below the cap, tubulin dimers are in GDP-bound state, owing to GTPase activity of alpha-tubulin. In Zea mays (Maize), this protein is Tubulin beta-3 chain (TUBB3).